Reading from the N-terminus, the 361-residue chain is tRNA 2-selenouridine synthase (361 aa).

Positions Leu-11–Trp-134 constitute a Rhodanese domain. The S-selanylcysteine intermediate role is filled by Cys-94.

It belongs to the SelU family. In terms of assembly, monomer.

The catalysed reaction is 5-methylaminomethyl-2-thiouridine(34) in tRNA + selenophosphate + (2E)-geranyl diphosphate + H2O + H(+) = 5-methylaminomethyl-2-selenouridine(34) in tRNA + (2E)-thiogeraniol + phosphate + diphosphate. It carries out the reaction 5-methylaminomethyl-2-thiouridine(34) in tRNA + (2E)-geranyl diphosphate = 5-methylaminomethyl-S-(2E)-geranyl-thiouridine(34) in tRNA + diphosphate. It catalyses the reaction 5-methylaminomethyl-S-(2E)-geranyl-thiouridine(34) in tRNA + selenophosphate + H(+) = 5-methylaminomethyl-2-(Se-phospho)selenouridine(34) in tRNA + (2E)-thiogeraniol. The enzyme catalyses 5-methylaminomethyl-2-(Se-phospho)selenouridine(34) in tRNA + H2O = 5-methylaminomethyl-2-selenouridine(34) in tRNA + phosphate. Functionally, involved in the post-transcriptional modification of the uridine at the wobble position (U34) of tRNA(Lys), tRNA(Glu) and tRNA(Gln). Catalyzes the conversion of 2-thiouridine (S2U-RNA) to 2-selenouridine (Se2U-RNA). Acts in a two-step process involving geranylation of 2-thiouridine (S2U) to S-geranyl-2-thiouridine (geS2U) and subsequent selenation of the latter derivative to 2-selenouridine (Se2U) in the tRNA chain. The protein is tRNA 2-selenouridine synthase of Salmonella schwarzengrund (strain CVM19633).